We begin with the raw amino-acid sequence, 977 residues long: Mast/stem cell growth factor receptor Kit (977 aa).

Positions 1–25 (MRGARGAWDFLFVLLLLLLVQTGSS) are cleaved as a signal peptide. At 26-525 (QPSVSPGELS…QIHAHTLFTP (500 aa)) the chain is on the extracellular side. 5 Ig-like C2-type domains span residues 27 to 112 (PSVS…VFVR), 121 to 205 (DLPL…LKVR), 212 to 309 (PVVS…LEVV), 318 to 411 (PMMN…VYVN), and 414 to 508 (PEIL…FNFA). Cysteines 58 and 97 form a disulfide. N-linked (GlcNAc...) asparagine glycans are attached at residues Asn94, Asn130, and Asn145. 3 disulfide bridges follow: Cys136–Cys186, Cys151–Cys183, and Cys233–Cys291. 9 N-linked (GlcNAc...) asparagine glycosylation sites follow: Asn284, Asn294, Asn301, Asn321, Asn353, Asn368, Asn401, Asn464, and Asn487. A disulfide bond links Cys429 and Cys492. Residues 526–546 (LLIGFVIAAGLMCIFVMILTY) form a helical membrane-spanning segment. The Cytoplasmic segment spans residues 547-977 (KYLQKPMYEV…TQPLLVHEDV (431 aa)). 2 positions are modified to phosphotyrosine: Tyr548 and Tyr554. Mg(2+) is bound at residue Tyr569. 2 positions are modified to phosphotyrosine; by autocatalysis: Tyr569 and Tyr571. An important for interaction with phosphotyrosine-binding proteins region spans residues 569–571 (YVY). Residues 590 to 938 (LSFGKTLGAG…ISESTNHIYS (349 aa)) enclose the Protein kinase domain. Residues 597–604 (GAGAFGKV), Lys624, and 672–678 (EYCCYGD) each bind ATP. Residues Tyr704 and Tyr722 each carry the phosphotyrosine; by autocatalysis modification. Position 731 is a phosphotyrosine (Tyr731). A phosphoserine; by PKC/PRKCA mark is found at Ser742 and Ser747. The Proton acceptor role is filled by Asp793. Arg797 provides a ligand contact to ATP. Asn798 and Asp811 together coordinate Mg(2+). Ser822 carries the post-translational modification Phosphoserine. Tyr824 bears the Phosphotyrosine; by autocatalysis mark. The residue at position 892 (Ser892) is a Phosphoserine. Tyr901 bears the Phosphotyrosine mark. Phosphotyrosine; by autocatalysis is present on Tyr937. Ser960 carries the phosphoserine modification.

This sequence belongs to the protein kinase superfamily. Tyr protein kinase family. CSF-1/PDGF receptor subfamily. In terms of assembly, monomer in the absence of bound KITLG/SCF. Homodimer in the presence of bound KITLG/SCF, forming a heterotetramer with two KITLG/SCF molecules. Interacts (via phosphorylated tyrosine residues) with the adapter proteins GRB2 and GRB7 (via SH2 domain), and SH2B2/APS. Interacts (via C-terminus) with MPDZ (via the tenth PDZ domain). Interacts (via phosphorylated tyrosine residues) with PIK3R1 and PIK3CD. Interacts (via phosphorylated tyrosine) with CRK (isoform Crk-II), FYN, SHC1 and MATK/CHK (via SH2 domain). Interacts with LYN and FES/FPS. Interacts (via phosphorylated tyrosine residues) with the protein phosphatases PTPN6/SHP-1 (via SH2 domain), PTPN11/SHP-2 (via SH2 domain) and PTPRU. Interacts with PLCG1. Interacts with DOK1 and TEC. Interacts with IL1RAP (independent of stimulation with KITLG/SCF). A mast cell-specific KITLG/SCF-induced interleukin-33 signaling complex contains IL1RL1, IL1RAP, KIT and MYD88. Post-translationally, ubiquitinated by SOCS6. KIT is rapidly ubiquitinated after autophosphorylation induced by KITLG/SCF binding, leading to internalization and degradation. In terms of processing, autophosphorylated on tyrosine residues. KITLG/SCF binding promotes autophosphorylation. Phosphorylated tyrosine residues are important for interaction with specific binding partners.

The protein resides in the cell membrane. It catalyses the reaction L-tyrosyl-[protein] + ATP = O-phospho-L-tyrosyl-[protein] + ADP + H(+). Present in an inactive conformation in the absence of bound ligand. KITLG/SCF binding leads to dimerization and activation by autophosphorylation on tyrosine residues. Activity is down-regulated by PRKCA-mediated phosphorylation on serine residues. Functionally, tyrosine-protein kinase that acts as a cell-surface receptor for the cytokine KITLG/SCF and plays an essential role in the regulation of cell survival and proliferation, hematopoiesis, stem cell maintenance, gametogenesis, mast cell development, migration and function, and in melanogenesis. In response to KITLG/SCF binding, KIT can activate several signaling pathways. Phosphorylates PIK3R1, PLCG1, SH2B2/APS and CBL. Activates the AKT1 signaling pathway by phosphorylation of PIK3R1, the regulatory subunit of phosphatidylinositol 3-kinase. Activated KIT also transmits signals via GRB2 and activation of RAS, RAF1 and the MAP kinases MAPK1/ERK2 and/or MAPK3/ERK1. Promotes activation of STAT family members STAT1, STAT3, STAT5A and STAT5B. Activation of PLCG1 leads to the production of the cellular signaling molecules diacylglycerol and inositol 1,4,5-trisphosphate. KIT signaling is modulated by protein phosphatases, and by rapid internalization and degradation of the receptor. Activated KIT promotes phosphorylation of the protein phosphatases PTPN6/SHP-1 and PTPRU, and of the transcription factors STAT1, STAT3, STAT5A and STAT5B. Promotes phosphorylation of PIK3R1, CBL, CRK (isoform Crk-II), LYN, MAPK1/ERK2 and/or MAPK3/ERK1, PLCG1, SRC and SHC1. The polypeptide is Mast/stem cell growth factor receptor Kit (KIT) (Bos taurus (Bovine)).